The following is a 315-amino-acid chain: Adenine deaminase (315 aa).

3 residues coordinate Zn(2+): histidine 14, histidine 16, and histidine 194. Glutamate 197 acts as the Proton donor in catalysis. Residue aspartate 275 participates in Zn(2+) binding. Residue aspartate 276 participates in substrate binding.

This sequence belongs to the metallo-dependent hydrolases superfamily. Adenosine and AMP deaminases family. Adenine deaminase type 2 subfamily. Requires Zn(2+) as cofactor.

The enzyme catalyses adenine + H2O + H(+) = hypoxanthine + NH4(+). Functionally, catalyzes the hydrolytic deamination of adenine to hypoxanthine. Plays an important role in the purine salvage pathway and in nitrogen catabolism. This is Adenine deaminase from Pseudomonas putida (strain GB-1).